The chain runs to 236 residues: Phosphoribosylformylglycinamidine synthase subunit PurQ (236 aa).

A Glutamine amidotransferase type-1 domain is found at 3–234 (FGVIVFPGSN…VDWWERGERL (232 aa)). The active-site Nucleophile is C86. Active-site residues include H203 and E205.

As to quaternary structure, part of the FGAM synthase complex composed of 1 PurL, 1 PurQ and 2 PurS subunits.

It is found in the cytoplasm. The catalysed reaction is N(2)-formyl-N(1)-(5-phospho-beta-D-ribosyl)glycinamide + L-glutamine + ATP + H2O = 2-formamido-N(1)-(5-O-phospho-beta-D-ribosyl)acetamidine + L-glutamate + ADP + phosphate + H(+). It carries out the reaction L-glutamine + H2O = L-glutamate + NH4(+). It functions in the pathway purine metabolism; IMP biosynthesis via de novo pathway; 5-amino-1-(5-phospho-D-ribosyl)imidazole from N(2)-formyl-N(1)-(5-phospho-D-ribosyl)glycinamide: step 1/2. Part of the phosphoribosylformylglycinamidine synthase complex involved in the purines biosynthetic pathway. Catalyzes the ATP-dependent conversion of formylglycinamide ribonucleotide (FGAR) and glutamine to yield formylglycinamidine ribonucleotide (FGAM) and glutamate. The FGAM synthase complex is composed of three subunits. PurQ produces an ammonia molecule by converting glutamine to glutamate. PurL transfers the ammonia molecule to FGAR to form FGAM in an ATP-dependent manner. PurS interacts with PurQ and PurL and is thought to assist in the transfer of the ammonia molecule from PurQ to PurL. The protein is Phosphoribosylformylglycinamidine synthase subunit PurQ of Moorella thermoacetica (strain ATCC 39073 / JCM 9320).